The primary structure comprises 73 residues: uncharacterized protein (73 aa).

Residues 20–49 adopt a coiled-coil conformation; it reads NATYNKNLELEKRLAKIRNEIPNKSKLIAT.

This is an uncharacterized protein from Acheta domesticus (House cricket).